The following is a 702-amino-acid chain: Cytolytic toxin-beta (702 aa).

Residues 2-264 (PSDILVVAAL…EAPQLMADSS (263 aa)) are structural MACPF/CDC pore-forming domain. N-linked (GlcNAc...) asparagine glycosylation is found at Asn-94, Asn-101, and Asn-286. Residues 265-387 (TPILRKVRNT…DIIEEAKHKV (123 aa)) are structural FAT domain. The tract at residues 388 to 515 (VLSKSQMARE…PRIPPVETIQ (128 aa)) is thioredoxin (THX) domain. Positions 504–702 (SNPRIPPVET…ANGQIKLKGE (199 aa)) constitute a B30.2/SPRY domain.

Belongs to the SNTX/VTX toxin family. Heterodimer of alpha and beta subunits; non-covalently linked. Also associates into tetramers or even higher aggregates. Intrachain disulfide bonds may be present in the heterodimer. In terms of tissue distribution, expressed by the venom gland.

Its subcellular location is the secreted. Functionally, this heterodimer induces potent hemolytic activities (when tested on rabbit erythrocytes, EC(50)=25-56 ng/mL) due to its ability to form pores in the cell membrane. The pore may be composed of 10 alpha/beta heterodimers. The toxin shows cardiovascular effects that include a vasorelaxant action that may involve the L-arginine-nitric oxid synthase pathway. In addition, it displays edema-inducing activities, increases vascular permeability. It also shows myotoxic activities and interferes irreversibly with neuromuscular function. It also induces irreversible platelet aggregation in rabbit or rat (but not in human or mouse) whole blood. In addition, it has been observed to increase spontaneous quantal acetylcholine release from isolated frog cutaneous pectoris motor endings. The protein is Cytolytic toxin-beta of Scorpaena plumieri (Spotted scorpionfish).